Here is a 666-residue protein sequence, read N- to C-terminus: tRNA 5-methylaminomethyl-2-thiouridine biosynthesis bifunctional protein MnmC (666 aa).

The tract at residues 1 to 245 is tRNA (mnm(5)s(2)U34)-methyltransferase; the sequence is MKQYAIQPAN…KREMLCGVMA (245 aa). An FAD-dependent cmnm(5)s(2)U34 oxidoreductase region spans residues 270-666; that stretch reads IGGGIASALL…RKLLKGKAVK (397 aa).

This sequence in the N-terminal section; belongs to the methyltransferase superfamily. tRNA (mnm(5)s(2)U34)-methyltransferase family. The protein in the C-terminal section; belongs to the DAO family. The cofactor is FAD.

Its subcellular location is the cytoplasm. The catalysed reaction is 5-aminomethyl-2-thiouridine(34) in tRNA + S-adenosyl-L-methionine = 5-methylaminomethyl-2-thiouridine(34) in tRNA + S-adenosyl-L-homocysteine + H(+). Catalyzes the last two steps in the biosynthesis of 5-methylaminomethyl-2-thiouridine (mnm(5)s(2)U) at the wobble position (U34) in tRNA. Catalyzes the FAD-dependent demodification of cmnm(5)s(2)U34 to nm(5)s(2)U34, followed by the transfer of a methyl group from S-adenosyl-L-methionine to nm(5)s(2)U34, to form mnm(5)s(2)U34. This is tRNA 5-methylaminomethyl-2-thiouridine biosynthesis bifunctional protein MnmC from Citrobacter koseri (strain ATCC BAA-895 / CDC 4225-83 / SGSC4696).